Here is a 389-residue protein sequence, read N- to C-terminus: Flap endonuclease 1 (389 aa).

Residues 1 to 105 (MGIKGLNKLL…GELAKRKERR (105 aa)) form an N-domain region. Residue aspartate 34 coordinates Mg(2+). Residues arginine 47 and arginine 71 each coordinate DNA. The Mg(2+) site is built by aspartate 87, glutamate 170, glutamate 172, aspartate 191, and aspartate 193. The tract at residues 134–265 (DVTRFEKRTV…QTALKLMKEH (132 aa)) is I-domain. Glutamate 170 contributes to the DNA binding site. DNA-binding residues include glycine 243 and aspartate 245. Aspartate 245 contributes to the Mg(2+) binding site. The tract at residues 351–359 (PQARLDGFF) is interaction with PCNA. Positions 360-389 (KVMPKEGGEKRKADDKKTKGKKPATKKAKK) are disordered. Positions 362–376 (MPKEGGEKRKADDKK) are enriched in basic and acidic residues. Positions 377-389 (TKGKKPATKKAKK) are enriched in basic residues.

The protein belongs to the XPG/RAD2 endonuclease family. FEN1 subfamily. In terms of assembly, interacts with PCNA. Three molecules of FEN1 bind to one PCNA trimer with each molecule binding to one PCNA monomer. PCNA stimulates the nuclease activity without altering cleavage specificity. Mg(2+) is required as a cofactor. Post-translationally, phosphorylated. Phosphorylation upon DNA damage induces relocalization to the nuclear plasma.

Its subcellular location is the nucleus. It is found in the nucleolus. The protein localises to the nucleoplasm. It localises to the mitochondrion. Functionally, structure-specific nuclease with 5'-flap endonuclease and 5'-3' exonuclease activities involved in DNA replication and repair. During DNA replication, cleaves the 5'-overhanging flap structure that is generated by displacement synthesis when DNA polymerase encounters the 5'-end of a downstream Okazaki fragment. It enters the flap from the 5'-end and then tracks to cleave the flap base, leaving a nick for ligation. Also involved in the long patch base excision repair (LP-BER) pathway, by cleaving within the apurinic/apyrimidinic (AP) site-terminated flap. Acts as a genome stabilization factor that prevents flaps from equilibrating into structures that lead to duplications and deletions. Also possesses 5'-3' exonuclease activity on nicked or gapped double-stranded DNA, and exhibits RNase H activity. Also involved in replication and repair of rDNA and in repairing mitochondrial DNA. The sequence is that of Flap endonuclease 1 from Yarrowia lipolytica (strain CLIB 122 / E 150) (Yeast).